A 238-amino-acid polypeptide reads, in one-letter code: 5-amino-6-(5-phospho-D-ribitylamino)uracil phosphatase YigB (238 aa).

Aspartate 16 functions as the Nucleophile in the catalytic mechanism. 3 residues coordinate Mg(2+): aspartate 16, aspartate 18, and aspartate 188. 16–18 (DLD) lines the substrate pocket.

It belongs to the HAD-like hydrolase superfamily. It depends on Mg(2+) as a cofactor. Requires Mn(2+) as cofactor. The cofactor is Co(2+). Zn(2+) serves as cofactor.

It catalyses the reaction 5-amino-6-(5-phospho-D-ribitylamino)uracil + H2O = 5-amino-6-(D-ribitylamino)uracil + phosphate. It participates in cofactor biosynthesis; riboflavin biosynthesis; 5-amino-6-(D-ribitylamino)uracil from GTP: step 4/4. Functionally, catalyzes the dephosphorylation of 5-amino-6-(5-phospho-D-ribitylamino)uracil, and thus could be involved in the riboflavin biosynthesis pathway. Is also able to dephosphorylate flavin mononucleotide (FMN) and other phosphoric acid esters. YigB is important for the formation of dormant persister cells. This chain is 5-amino-6-(5-phospho-D-ribitylamino)uracil phosphatase YigB (yigB), found in Escherichia coli (strain K12).